Consider the following 622-residue polypeptide: E3 ubiquitin-protein ligase hrd-1 (622 aa).

The first 23 residues, Met1 to Ala23, serve as a signal peptide directing secretion. The Lumenal portion of the chain corresponds to Phe24 to Asn41. A helical membrane pass occupies residues Ala42–Leu62. At Lys63–Asp99 the chain is on the cytoplasmic side. The helical transmembrane segment at Phe100–Leu120 threads the bilayer. Over Ala121–Arg141 the chain is Lumenal. Residues Met142–Phe162 form a helical membrane-spanning segment. The Cytoplasmic portion of the chain corresponds to Ser163–Ser170. Residues Ser171–Ile191 form a helical membrane-spanning segment. The Lumenal segment spans residues Lys192–Tyr215. Residues Ala216–Leu236 traverse the membrane as a helical segment. Topologically, residues Arg237–Glu622 are cytoplasmic. The RING-type; atypical zinc-finger motif lies at Cys292–Arg333. Residues Met436–Asn445 show a composition bias toward pro residues. Disordered stretches follow at residues Met436–Asp463 and Pro514–Glu622. A compositionally biased stretch (low complexity) spans Ala526 to Glu538. A compositionally biased stretch (polar residues) spans Phe562 to Pro577. Residues Pro579–Thr596 are compositionally biased toward low complexity.

It belongs to the HRD1 family. Homodimer.

Its subcellular location is the endoplasmic reticulum membrane. The catalysed reaction is S-ubiquitinyl-[E2 ubiquitin-conjugating enzyme]-L-cysteine + [acceptor protein]-L-lysine = [E2 ubiquitin-conjugating enzyme]-L-cysteine + N(6)-ubiquitinyl-[acceptor protein]-L-lysine.. Its pathway is protein modification; protein ubiquitination. In terms of biological role, acts as an E3 ubiquitin-protein ligase which accepts ubiquitin specifically from endoplasmic reticulum-associated ubc-7 E2 ligase and transfers it to substrates, promoting their degradation. Component of the endoplasmic reticulum quality control (ERQC) system, which is also called the ER-associated degradation (ERAD) system, involved in ubiquitin-dependent degradation of misfolded endoplasmic reticulum proteins. Also promotes the degradation of normal but naturally short-lived proteins. Protects cells from ER stress-induced apoptosis. Thought to play a role together with hsp-3 in developmental growth and function of intestinal cells and to play a role together with hsp-4 in gonad formation. The protein is E3 ubiquitin-protein ligase hrd-1 of Caenorhabditis briggsae.